The chain runs to 237 residues: Ribonuclease PH (237 aa).

Residues R86 and 124–126 contribute to the phosphate site; that span reads GTR.

It belongs to the RNase PH family. As to quaternary structure, homohexameric ring arranged as a trimer of dimers.

The enzyme catalyses tRNA(n+1) + phosphate = tRNA(n) + a ribonucleoside 5'-diphosphate. Its function is as follows. Phosphorolytic 3'-5' exoribonuclease that plays an important role in tRNA 3'-end maturation. Removes nucleotide residues following the 3'-CCA terminus of tRNAs; can also add nucleotides to the ends of RNA molecules by using nucleoside diphosphates as substrates, but this may not be physiologically important. Probably plays a role in initiation of 16S rRNA degradation (leading to ribosome degradation) during starvation. This is Ribonuclease PH from Shewanella sp. (strain W3-18-1).